Here is a 141-residue protein sequence, read N- to C-terminus: MSVLVYFSSSSENTHRFVKKLCIPAKRIPLIDKKEFQIKSPYILVIPSYNNGILDTAVPHQVTNFLNTLHNKFFLKGVIGSGNKNFGVNFCIAGNIISKKYKVPLLYKFELLGTNKDVINVKNGINKFWKKLNLEKKNQNA.

This sequence belongs to the NrdI family.

Functionally, probably involved in ribonucleotide reductase function. This Wigglesworthia glossinidia brevipalpis protein is Protein NrdI.